The sequence spans 250 residues: 1-(5-phosphoribosyl)-5-[(5-phosphoribosylamino)methylideneamino] imidazole-4-carboxamide isomerase (250 aa).

Asp8 acts as the Proton acceptor in catalysis. Catalysis depends on Asp131, which acts as the Proton donor.

The protein belongs to the HisA/HisF family.

It is found in the cytoplasm. The catalysed reaction is 1-(5-phospho-beta-D-ribosyl)-5-[(5-phospho-beta-D-ribosylamino)methylideneamino]imidazole-4-carboxamide = 5-[(5-phospho-1-deoxy-D-ribulos-1-ylimino)methylamino]-1-(5-phospho-beta-D-ribosyl)imidazole-4-carboxamide. It functions in the pathway amino-acid biosynthesis; L-histidine biosynthesis; L-histidine from 5-phospho-alpha-D-ribose 1-diphosphate: step 4/9. The chain is 1-(5-phosphoribosyl)-5-[(5-phosphoribosylamino)methylideneamino] imidazole-4-carboxamide isomerase from Paraburkholderia phymatum (strain DSM 17167 / CIP 108236 / LMG 21445 / STM815) (Burkholderia phymatum).